We begin with the raw amino-acid sequence, 309 residues long: General transcription factor IIH subunit 3 (309 aa).

The C4-type zinc finger occupies 269-286; it reads CSVCLSIFCNFSPICTTC.

This sequence belongs to the TFB4 family. Part of a TFIID-containing RNA polymerase II pre-initiation complex that is composed of TBP and at least GTF2A1, GTF2A2, GTF2E1, GTF2E2, GTF2F1, GTF2H2, GTF2H3, GTF2H4, GTF2H5, GTF2B, TCEA1, ERCC2, ERCC3, TAF1, TAF2, TAF3, TAF4, TAF5, TAF6, TAF7, TAF8, TAF9, TAF10, TAF11, TAF12 and TAF13. Component of the 7-subunit TFIIH core complex composed of XPB/ERCC3, XPD/ERCC2, GTF2H1, GTF2H2, GTF2H3, GTF2H4 and GTF2H5, which is active in NER. The core complex associates with the 3-subunit CDK-activating kinase (CAK) module composed of CCNH/cyclin H, CDK7 and MNAT1 to form the 10-subunit holoenzyme (holo-TFIIH) active in transcription. Interacts with RARA; the interaction requires prior phosphorylation of RARA on 'Ser-369' which then enhances interaction of RARA with CDK7.

The protein resides in the nucleus. In terms of biological role, component of the general transcription and DNA repair factor IIH (TFIIH) core complex, which is involved in general and transcription-coupled nucleotide excision repair (NER) of damaged DNA and, when complexed to CAK, in RNA transcription by RNA polymerase II. In NER, TFIIH acts by opening DNA around the lesion to allow the excision of the damaged oligonucleotide and its replacement by a new DNA fragment. In transcription, TFIIH has an essential role in transcription initiation. When the pre-initiation complex (PIC) has been established, TFIIH is required for promoter opening and promoter escape. Phosphorylation of the C-terminal tail (CTD) of the largest subunit of RNA polymerase II by the kinase module CAK controls the initiation of transcription. This is General transcription factor IIH subunit 3 (Gtf2h3) from Rattus norvegicus (Rat).